The primary structure comprises 104 residues: Small ribosomal subunit protein uS10 (104 aa).

The protein belongs to the universal ribosomal protein uS10 family. Part of the 30S ribosomal subunit.

Functionally, involved in the binding of tRNA to the ribosomes. The chain is Small ribosomal subunit protein uS10 from Helicobacter pylori (strain P12).